The chain runs to 83 residues: MSKDNTIQFDISESKKALTREILTEVYDSLIKKGYNPVNQLVGYLISGDPTYITNYNGARSLVRKLERDEILEEVLKAYLGIK.

Belongs to the UPF0297 family.

The protein is UPF0297 protein CKR_1221 of Clostridium kluyveri (strain NBRC 12016).